A 378-amino-acid polypeptide reads, in one-letter code: Acetylornithine deacetylase (378 aa).

Histidine 76 contributes to the Zn(2+) binding site. The active site involves aspartate 78. Aspartate 108 contacts Zn(2+). Glutamate 140 is a catalytic residue. Zn(2+) contacts are provided by glutamate 141, glutamate 165, and histidine 351.

Belongs to the peptidase M20A family. ArgE subfamily. In terms of assembly, homodimer. It depends on Zn(2+) as a cofactor. The cofactor is Co(2+). Glutathione is required as a cofactor.

The protein resides in the cytoplasm. It catalyses the reaction N(2)-acetyl-L-ornithine + H2O = L-ornithine + acetate. Its pathway is amino-acid biosynthesis; L-arginine biosynthesis; L-ornithine from N(2)-acetyl-L-ornithine (linear): step 1/1. Its function is as follows. Catalyzes the hydrolysis of the amide bond of N(2)-acetylated L-amino acids. Cleaves the acetyl group from N-acetyl-L-ornithine to form L-ornithine, an intermediate in L-arginine biosynthesis pathway, and a branchpoint in the synthesis of polyamines. The polypeptide is Acetylornithine deacetylase (Vibrio vulnificus (strain CMCP6)).